Consider the following 378-residue polypeptide: MSTSAPAALRKTALNAVHRRLGAKMVDFGGWDMPVEYSGLIAEHMAVRTGVGLFDVSHMGDIQLRGPGSLDAVQHICMNDASKLAVGQAHYSAMLYPQGTFVDDVIVHKFSDNDYLIVINAGTREKDYEWIRSHAQPFHCHVSNYSDLYTQLAIQGPRAAETLAKLTSVDLAAIKNYRFTWGTVCNLHNTLIARTGYTGEDGFEIYIPSDEATSERVWNEVLEAGKEFGIVPCGLGARNTLRLESAMALYGHEISQDIDVFEAGLDRYCKLDKGTFVGSEALKQVVAQGGPKRKLVGLEMIDRGIARDGYRVLNDTQQAVGYVTSGSPAPFLKKNIALAYVPTELATLDREVFVEIRNNPVKARIVPTPFYRRPKKQA.

It belongs to the GcvT family. The glycine cleavage system is composed of four proteins: P, T, L and H.

It carries out the reaction N(6)-[(R)-S(8)-aminomethyldihydrolipoyl]-L-lysyl-[protein] + (6S)-5,6,7,8-tetrahydrofolate = N(6)-[(R)-dihydrolipoyl]-L-lysyl-[protein] + (6R)-5,10-methylene-5,6,7,8-tetrahydrofolate + NH4(+). Its function is as follows. The glycine cleavage system catalyzes the degradation of glycine. The protein is Aminomethyltransferase of Acidobacterium capsulatum (strain ATCC 51196 / DSM 11244 / BCRC 80197 / JCM 7670 / NBRC 15755 / NCIMB 13165 / 161).